We begin with the raw amino-acid sequence, 63 residues long: Beta-glucosidase A-3 (63 aa).

Residue D12 is part of the active site. Residues N48 and N56 are each glycosylated (N-linked (GlcNAc...) asparagine).

This sequence belongs to the glycosyl hydrolase 3 family.

It catalyses the reaction Hydrolysis of terminal, non-reducing beta-D-glucosyl residues with release of beta-D-glucose.. It functions in the pathway glycan metabolism; cellulose degradation. The sequence is that of Beta-glucosidase A-3 from Aspergillus wentii.